The primary structure comprises 437 residues: F-box only protein 9 (437 aa).

The disordered stretch occupies residues Met-1–Asp-29. A compositionally biased stretch (acidic residues) spans Gly-16–Ala-26. A TPR repeat occupies Ala-84–Ile-117. Residue Ser-126 is modified to Phosphoserine. In terms of domain architecture, F-box spans Gln-175 to Ala-226.

In terms of assembly, part of the SCF (SKP1-CUL1-F-box) E3 ubiquitin-protein ligase complex SCF(FBXO9) composed of CUL1, SKP1, RBX1 and FBXO9. Interacts with TTI1 and TELO2; when TTI1 and TELO2 are phosphorylated by CK2.

The protein localises to the cytoplasm. Its pathway is protein modification; protein ubiquitination. Its function is as follows. Substrate recognition component of a SCF (SKP1-CUL1-F-box protein) E3 ubiquitin-protein ligase complex which mediates the ubiquitination and subsequent proteasomal degradation of target proteins and plays a role in several biological processes such as cell cycle, cell proliferation, or maintenance of chromosome stability. Ubiquitinates mTORC1-bound TTI1 and TELO2 when they are phosphorylated by CK2 following growth factor deprivation, leading to their degradation. In contrast, does not mediate ubiquitination of TTI1 and TELO2 when they are part of the mTORC2 complex. As a consequence, mTORC1 is inactivated to restrain cell growth and protein translation, while mTORC2 is the activated due to the relief of feedback inhibition by mTORC1. Plays a role in maintaining epithelial cell survival by regulating the turn-over of chromatin modulator PRMT4 through ubiquitination and degradation by the proteasomal pathway. Also regulates PPARgamma stability by facilitating PPARgamma/PPARG ubiquitination and thereby plays a role in adipocyte differentiation. The protein is F-box only protein 9 (FBXO9) of Bos taurus (Bovine).